Reading from the N-terminus, the 140-residue chain is Putative nickel-responsive regulator (140 aa).

Residues histidine 81, histidine 92, histidine 94, and cysteine 100 each coordinate Ni(2+).

It belongs to the transcriptional regulatory CopG/NikR family. It depends on Ni(2+) as a cofactor.

Functionally, transcriptional regulator. This Methanothrix thermoacetophila (strain DSM 6194 / JCM 14653 / NBRC 101360 / PT) (Methanosaeta thermophila) protein is Putative nickel-responsive regulator.